Reading from the N-terminus, the 83-residue chain is MRLFLSLPVLVVVLSMVLEGPAPAQGAPDVSSALDKLKEFGNTLEDKAWEVINRIKQSEFPAKTRDWFSETFRKVKEKLKINS.

The signal sequence occupies residues 1–26; it reads MRLFLSLPVLVVVLSMVLEGPAPAQG.

This sequence belongs to the apolipoprotein C1 family.

The protein resides in the secreted. Inhibitor of lipoprotein binding to the low density lipoprotein (LDL) receptor, LDL receptor-related protein, and very low density lipoprotein (VLDL) receptor. Associates with high density lipoproteins (HDL) and the triacylglycerol-rich lipoproteins in the plasma and makes up about 10% of the protein of the VLDL and 2% of that of HDL. Appears to interfere directly with fatty acid uptake and is also the major plasma inhibitor of cholesteryl ester transfer protein (CETP). Binds free fatty acids and reduces their intracellular esterification. Modulates the interaction of APOE with beta-migrating VLDL and inhibits binding of beta-VLDL to the LDL receptor-related protein. This chain is Apolipoprotein C-I, basic form (APOC1B), found in Cercocebus atys (Sooty mangabey).